The following is a 1024-amino-acid chain: Protein translocase subunit SecA (1024 aa).

ATP-binding positions include Gln-143, 161-165, and Asp-661; that span reads GEGKT. The segment at 970-1024 is disordered; it reads HKAAESVYTASSDEPETNQEESPQQPAIAEKKPGRNDLCPCGSGKKYKNCHGQQP. Cys-1008, Cys-1010, Cys-1019, and His-1020 together coordinate Zn(2+).

Belongs to the SecA family. In terms of assembly, monomer and homodimer. Part of the essential Sec protein translocation apparatus which comprises SecA, SecYEG and auxiliary proteins SecDF. Other proteins may also be involved. Zn(2+) serves as cofactor.

The protein resides in the cell inner membrane. Its subcellular location is the cytoplasm. It catalyses the reaction ATP + H2O + cellular proteinSide 1 = ADP + phosphate + cellular proteinSide 2.. Part of the Sec protein translocase complex. Interacts with the SecYEG preprotein conducting channel. Has a central role in coupling the hydrolysis of ATP to the transfer of proteins into and across the cell membrane, serving as an ATP-driven molecular motor driving the stepwise translocation of polypeptide chains across the membrane. The sequence is that of Protein translocase subunit SecA from Pelodictyon phaeoclathratiforme (strain DSM 5477 / BU-1).